A 54-amino-acid chain; its full sequence is U7-myrmicitoxin-Tb1a (54 aa).

A signal peptide spans 1-26 (MQLSHLLLAFAMIFVMTIIHTPQVQA). A propeptide spanning residues 27–36 (DAMADADADA) is cleaved from the precursor. Cysteine 40 and cysteine 49 are disulfide-bonded.

Expressed by the venom gland.

It is found in the secreted. Functionally, venom protein with unknown function. Does not induce paralysis when a high dose is administered by intrathoracic injection into the blowfly Lucilia caesar. The protein is U7-myrmicitoxin-Tb1a of Tetramorium bicarinatum (Tramp ant).